A 218-amino-acid polypeptide reads, in one-letter code: Adenylate kinase (218 aa).

10–15 (GAGKGT) provides a ligand contact to ATP. The interval 30–59 (STGDMFRAAMADQTDLGVKAKAFIDKGELV) is NMP. Residues Thr31, Arg36, 57–59 (ELV), 85–88 (GFPR), and Gln92 contribute to the AMP site. The LID stretch occupies residues 126-164 (GRFICKTCGATYHKLYHPTQVEGTCDRCGGHVFFQREDD). Arg127 provides a ligand contact to ATP. Positions 130 and 133 each coordinate Zn(2+). 136 to 137 (TY) lines the ATP pocket. Positions 150 and 153 each coordinate Zn(2+). Positions 161 and 172 each coordinate AMP. Gln200 lines the ATP pocket.

The protein belongs to the adenylate kinase family. As to quaternary structure, monomer.

Its subcellular location is the cytoplasm. The enzyme catalyses AMP + ATP = 2 ADP. Its pathway is purine metabolism; AMP biosynthesis via salvage pathway; AMP from ADP: step 1/1. Functionally, catalyzes the reversible transfer of the terminal phosphate group between ATP and AMP. Plays an important role in cellular energy homeostasis and in adenine nucleotide metabolism. This Latilactobacillus sakei subsp. sakei (strain 23K) (Lactobacillus sakei subsp. sakei) protein is Adenylate kinase.